Here is a 514-residue protein sequence, read N- to C-terminus: uncharacterized protein (514 aa).

Disordered regions lie at residues 1–68, 109–244, and 272–484; these read MSSP…SESE, VPPP…RQAS, and RPAV…AQGC. Positions 368 to 384 are enriched in basic residues; it reads KPQKPKHSSPGKKPAGR. Positions 385–405 are enriched in basic and acidic residues; that stretch reads KTRESQAAAREDNDPNRDEVP.

This is an uncharacterized protein from Homo sapiens (Human).